The primary structure comprises 223 residues: Ras-related protein Rab-21 (223 aa).

An N-acetylalanine modification is found at alanine 2. Glycine 26, glycine 29, lysine 30, threonine 31, serine 32, asparagine 43, aspartate 44, histidine 46, threonine 48, and threonine 49 together coordinate GTP. Threonine 31 contributes to the Mg(2+) binding site. The Switch 1 signature appears at 41–54 (KFNDKHITTLQASF). 2 residues coordinate Mg(2+): threonine 49 and aspartate 72. The short motif at 74–92 (AGQERFHALGPIYYRDSNG) is the Switch 2 element. The GTP site is built by glycine 75, asparagine 130, lysine 131, aspartate 133, alanine 161, and lysine 162. Residues cysteine 219 and cysteine 220 are each lipidated (S-geranylgeranyl cysteine). Cysteine 220 carries the post-translational modification Cysteine methyl ester. Residues 221–223 (SSG) constitute a propeptide, removed in mature form.

The protein belongs to the small GTPase superfamily. Rab family. As to quaternary structure, interacts with the cytoplasmic tail of integrins ITGA1, ITGA2, ITGA5, ITGA6, ITGA11 and ITGB1; this interaction is dependent upon its GDP/GTP cycle. Interacts with ANKRD27. Interacts (active GTP-bound form) with TMED10; the interaction is indirect and regulates TMED10 abundance and localization at the Golgi. Mg(2+) serves as cofactor.

Its subcellular location is the endoplasmic reticulum membrane. It localises to the golgi apparatus. It is found in the trans-Golgi network. The protein resides in the golgi apparatus membrane. The protein localises to the early endosome membrane. Its subcellular location is the cytoplasmic vesicle membrane. It localises to the cleavage furrow. It is found in the cell projection. The protein resides in the neuron projection. It catalyses the reaction GTP + H2O = GDP + phosphate + H(+). Its activity is regulated as follows. Regulated by guanine nucleotide exchange factors (GEFs) including ANKRD27 and RABGEF1, which promote the exchange of bound GDP for free GTP. Regulated by GTPase activating proteins (GAPs) which increase the GTP hydrolysis activity. Inhibited by GDP dissociation inhibitors (GDIs). In terms of biological role, the small GTPases Rab are key regulators of intracellular membrane trafficking, from the formation of transport vesicles to their fusion with membranes. Rabs cycle between an inactive GDP-bound form and an active GTP-bound form that is able to recruit to membranes different sets of downstream effectors directly responsible for vesicle formation, movement, tethering and fusion. RAB21 is involved in membrane trafficking control. Regulates integrin internalization and recycling, but does not influence the traffic of endosomally translocated receptors in general. As a result, may regulate cell adhesion and migration. During the mitosis of adherent cells, controls the endosomal trafficking of integrins which is required for the successful completion of cytokinesis. Involved in neurite growth. Modulates protein levels of the cargo receptors TMED2 and TMED10, and required for appropriate Golgi localization of TMED10. In Canis lupus familiaris (Dog), this protein is Ras-related protein Rab-21 (RAB21).